Reading from the N-terminus, the 117-residue chain is Holo-[acyl-carrier-protein] synthase (117 aa).

The Mg(2+) site is built by aspartate 8 and glutamate 58.

This sequence belongs to the P-Pant transferase superfamily. AcpS family. Mg(2+) serves as cofactor.

The protein localises to the cytoplasm. It carries out the reaction apo-[ACP] + CoA = holo-[ACP] + adenosine 3',5'-bisphosphate + H(+). In terms of biological role, transfers the 4'-phosphopantetheine moiety from coenzyme A to a Ser of acyl-carrier-protein. This is Holo-[acyl-carrier-protein] synthase from Latilactobacillus sakei subsp. sakei (strain 23K) (Lactobacillus sakei subsp. sakei).